A 332-amino-acid polypeptide reads, in one-letter code: L-lactate dehydrogenase A chain (332 aa).

NAD(+)-binding positions include 29–57 (GAVG…VEDK) and arginine 99. Residues arginine 106, asparagine 138, and arginine 169 each coordinate substrate. An NAD(+)-binding site is contributed by asparagine 138. Histidine 193 (proton acceptor) is an active-site residue. Substrate is bound at residue threonine 248.

This sequence belongs to the LDH/MDH superfamily. LDH family. In terms of assembly, homotetramer.

It localises to the cytoplasm. The enzyme catalyses (S)-lactate + NAD(+) = pyruvate + NADH + H(+). Its pathway is fermentation; pyruvate fermentation to lactate; (S)-lactate from pyruvate: step 1/1. In terms of biological role, interconverts simultaneously and stereospecifically pyruvate and lactate with concomitant interconversion of NADH and NAD(+). The chain is L-lactate dehydrogenase A chain (LDHA) from Gallus gallus (Chicken).